We begin with the raw amino-acid sequence, 946 residues long: Bifunctional glutamine synthetase adenylyltransferase/adenylyl-removing enzyme (946 aa).

Residues Met-1–Glu-440 form an adenylyl removase region. Positions Ser-449–Glu-946 are adenylyl transferase.

It belongs to the GlnE family. Requires Mg(2+) as cofactor.

The enzyme catalyses [glutamine synthetase]-O(4)-(5'-adenylyl)-L-tyrosine + phosphate = [glutamine synthetase]-L-tyrosine + ADP. The catalysed reaction is [glutamine synthetase]-L-tyrosine + ATP = [glutamine synthetase]-O(4)-(5'-adenylyl)-L-tyrosine + diphosphate. Functionally, involved in the regulation of glutamine synthetase GlnA, a key enzyme in the process to assimilate ammonia. When cellular nitrogen levels are high, the C-terminal adenylyl transferase (AT) inactivates GlnA by covalent transfer of an adenylyl group from ATP to specific tyrosine residue of GlnA, thus reducing its activity. Conversely, when nitrogen levels are low, the N-terminal adenylyl removase (AR) activates GlnA by removing the adenylyl group by phosphorolysis, increasing its activity. The regulatory region of GlnE binds the signal transduction protein PII (GlnB) which indicates the nitrogen status of the cell. This is Bifunctional glutamine synthetase adenylyltransferase/adenylyl-removing enzyme from Escherichia coli O45:K1 (strain S88 / ExPEC).